A 124-amino-acid chain; its full sequence is Small ribosomal subunit protein uS12 (124 aa).

Residues 1-32 (MPTIQQLVRKGRQAKTTKTKTPALKGSPQRRG) are disordered. Over residues 9-18 (RKGRQAKTTK) the composition is skewed to basic residues. At Asp89 the chain carries 3-methylthioaspartic acid. The interval 105–124 (QGVRNRKQARSRYGAKKEKS) is disordered. The span at 108–118 (RNRKQARSRYG) shows a compositional bias: basic residues.

It belongs to the universal ribosomal protein uS12 family. As to quaternary structure, part of the 30S ribosomal subunit. Contacts proteins S8 and S17. May interact with IF1 in the 30S initiation complex.

With S4 and S5 plays an important role in translational accuracy. Functionally, interacts with and stabilizes bases of the 16S rRNA that are involved in tRNA selection in the A site and with the mRNA backbone. Located at the interface of the 30S and 50S subunits, it traverses the body of the 30S subunit contacting proteins on the other side and probably holding the rRNA structure together. The combined cluster of proteins S8, S12 and S17 appears to hold together the shoulder and platform of the 30S subunit. This is Small ribosomal subunit protein uS12 from Salinispora arenicola (strain CNS-205).